The sequence spans 375 residues: Protein kinase MCK1 (375 aa).

Ser2 carries the N-acetylserine modification. Residues 35 to 327 (VKEYRKIGRG…PRRILAHQFF (293 aa)) enclose the Protein kinase domain. ATP is bound by residues 41–49 (IGRGAFGTV) and Lys68. Catalysis depends on Asp164, which acts as the Proton acceptor. Ser198 is modified (phosphoserine). Residue Tyr199 is modified to Phosphotyrosine. Ser202 is modified (phosphoserine).

This sequence belongs to the protein kinase superfamily. Ser/Thr protein kinase family. In terms of processing, phosphorylated at tyrosine and serine.

The enzyme catalyses L-seryl-[protein] + ATP = O-phospho-L-seryl-[protein] + ADP + H(+). It carries out the reaction L-threonyl-[protein] + ATP = O-phospho-L-threonyl-[protein] + ADP + H(+). The catalysed reaction is L-tyrosyl-[protein] + ATP = O-phospho-L-tyrosyl-[protein] + ADP + H(+). Its function is as follows. May be an autophosphorylating tyrosine kinase, a bifunctional (serine/tyrosine-specific) protein kinase, or a serine kinase that is a substrate for an associated tyrosine kinase. MCK1 is a transcriptional activator of IME1, it stimulates spore maturation, and play a positive regulatory role in both mitotic centromere function and activation of early meiotic gene expression. The sequence is that of Protein kinase MCK1 (MCK1) from Saccharomyces cerevisiae (strain ATCC 204508 / S288c) (Baker's yeast).